The primary structure comprises 243 residues: DNA repair protein RecO (243 aa).

This sequence belongs to the RecO family.

In terms of biological role, involved in DNA repair and RecF pathway recombination. In Vibrio parahaemolyticus serotype O3:K6 (strain RIMD 2210633), this protein is DNA repair protein RecO.